We begin with the raw amino-acid sequence, 184 residues long: Photosystem I assembly protein Ycf4 (184 aa).

The next 2 membrane-spanning stretches (helical) occupy residues 25 to 45 (ACIL…SYLG) and 57 to 77 (ILFV…LFIS).

Belongs to the Ycf4 family.

It localises to the plastid. Its subcellular location is the chloroplast thylakoid membrane. Functionally, seems to be required for the assembly of the photosystem I complex. The polypeptide is Photosystem I assembly protein Ycf4 (Cycas taitungensis (Prince sago)).